Here is a 631-residue protein sequence, read N- to C-terminus: 1-deoxy-D-xylulose-5-phosphate synthase (631 aa).

Residues H87 and 128–130 (GHS) each bind thiamine diphosphate. Residue D159 participates in Mg(2+) binding. Thiamine diphosphate is bound by residues 160–161 (GA), N188, F295, and E377. N188 lines the Mg(2+) pocket.

This sequence belongs to the transketolase family. DXPS subfamily. Homodimer. The cofactor is Mg(2+). Requires thiamine diphosphate as cofactor.

The enzyme catalyses D-glyceraldehyde 3-phosphate + pyruvate + H(+) = 1-deoxy-D-xylulose 5-phosphate + CO2. The protein operates within metabolic intermediate biosynthesis; 1-deoxy-D-xylulose 5-phosphate biosynthesis; 1-deoxy-D-xylulose 5-phosphate from D-glyceraldehyde 3-phosphate and pyruvate: step 1/1. Functionally, catalyzes the acyloin condensation reaction between C atoms 2 and 3 of pyruvate and glyceraldehyde 3-phosphate to yield 1-deoxy-D-xylulose-5-phosphate (DXP). The polypeptide is 1-deoxy-D-xylulose-5-phosphate synthase (Pseudomonas putida (strain GB-1)).